The primary structure comprises 492 residues: N-succinylglutamate 5-semialdehyde dehydrogenase (492 aa).

Glycine 220 to glycine 225 serves as a coordination point for NAD(+). Active-site residues include glutamate 243 and cysteine 277.

It belongs to the aldehyde dehydrogenase family. AstD subfamily.

It catalyses the reaction N-succinyl-L-glutamate 5-semialdehyde + NAD(+) + H2O = N-succinyl-L-glutamate + NADH + 2 H(+). It functions in the pathway amino-acid degradation; L-arginine degradation via AST pathway; L-glutamate and succinate from L-arginine: step 4/5. Its function is as follows. Catalyzes the NAD-dependent reduction of succinylglutamate semialdehyde into succinylglutamate. In Escherichia coli O6:H1 (strain CFT073 / ATCC 700928 / UPEC), this protein is N-succinylglutamate 5-semialdehyde dehydrogenase.